Reading from the N-terminus, the 140-residue chain is Cytochrome c-type biogenesis protein CcmE (140 aa).

Residues Met1–Arg7 lie on the Cytoplasmic side of the membrane. The helical; Signal-anchor for type II membrane protein transmembrane segment at Met8–Ala28 threads the bilayer. Topologically, residues Phe29–Gln140 are periplasmic. The heme site is built by His120 and Tyr124.

This sequence belongs to the CcmE/CycJ family.

It is found in the cell inner membrane. Its function is as follows. Heme chaperone required for the biogenesis of c-type cytochromes. Transiently binds heme delivered by CcmC and transfers the heme to apo-cytochromes in a process facilitated by CcmF and CcmH. This Vesicomyosocius okutanii subsp. Calyptogena okutanii (strain HA) protein is Cytochrome c-type biogenesis protein CcmE.